We begin with the raw amino-acid sequence, 464 residues long: 3-isopropylmalate dehydratase large subunit (464 aa).

[4Fe-4S] cluster contacts are provided by Cys-337, Cys-397, and Cys-400.

This sequence belongs to the aconitase/IPM isomerase family. LeuC type 1 subfamily. As to quaternary structure, heterodimer of LeuC and LeuD. It depends on [4Fe-4S] cluster as a cofactor.

It catalyses the reaction (2R,3S)-3-isopropylmalate = (2S)-2-isopropylmalate. It functions in the pathway amino-acid biosynthesis; L-leucine biosynthesis; L-leucine from 3-methyl-2-oxobutanoate: step 2/4. Functionally, catalyzes the isomerization between 2-isopropylmalate and 3-isopropylmalate, via the formation of 2-isopropylmaleate. The sequence is that of 3-isopropylmalate dehydratase large subunit from Bacillus cereus (strain 03BB102).